The chain runs to 580 residues: Ran GTPase-activating protein 1 (580 aa).

LRR repeat units follow at residues 48–71 (YEGL…AIAE), 111–134 (GAQL…GFEA), 141–168 (CFTL…ALTE), 207–230 (IGTL…ALAE), 235–258 (NSLL…AMAE), 292–315 (LHKL…SLAE), and 320–343 (KSDL…QVQE). Positions 356 to 429 (SLSDDEDEDD…PPKLPVDAST (74 aa)) are disordered. Over residues 358-399 (SDDEDEDDDDDDEDDDDDEDDENDDEEVEEEEEEVEEEEGGD) the composition is skewed to acidic residues.

Belongs to the RNA1 family. Homodimer. Identified in a complex with RANBP2 and the ubiquitin-conjugating enzyme E2 (UBE2I). May be sumoylated.

It is found in the cytoplasm. Its subcellular location is the nucleus. The protein resides in the nucleoplasm. The protein localises to the nucleus envelope. It localises to the chromosome. It is found in the centromere. Its subcellular location is the kinetochore. The protein resides in the cytoskeleton. The protein localises to the spindle. GTPase activator for RAN, converting it to the GDP-bound state. Converts cytoplasmic GTP-bound RAN to GDP-bound RAN, which is required for RAN-mediated nuclear import and export. This is Ran GTPase-activating protein 1 (rangap1) from Xenopus laevis (African clawed frog).